A 492-amino-acid polypeptide reads, in one-letter code: Spindle assembly abnormal protein 6 (492 aa).

A PISA domain is found at 46–98; it reads SGEKELKFEISRSDDFEFLFSETLNNEKYQILARDHDLTVDFDAFPKVIIQHL. The stretch at 192–407 forms a coiled coil; that stretch reads KSADELASLR…KIAHYRAQRF (216 aa).

As to quaternary structure, nine homodimers form a cartwheel structure with an internal diameter of 23 nM and radial spokes connecting to the microtubule triplets. Interacts with sas-5.

The protein resides in the cytoplasm. Its subcellular location is the cytoskeleton. It localises to the microtubule organizing center. It is found in the centrosome. The protein localises to the centriole. Its function is as follows. Central scaffolding component of the centrioles ensuring their 9-fold symmetry. Required for centrosome biogenesis and duplication. The chain is Spindle assembly abnormal protein 6 from Caenorhabditis elegans.